The primary structure comprises 404 residues: Glucose-1-phosphate adenylyltransferase (404 aa).

Alpha-D-glucose 1-phosphate-binding positions include tyrosine 99, glycine 164, 179–180 (EK), and serine 197.

This sequence belongs to the bacterial/plant glucose-1-phosphate adenylyltransferase family.

It carries out the reaction alpha-D-glucose 1-phosphate + ATP + H(+) = ADP-alpha-D-glucose + diphosphate. It participates in capsule biogenesis; capsule polysaccharide biosynthesis. The protein operates within glycan biosynthesis; glycogen biosynthesis. Its function is as follows. Involved in the biosynthesis of ADP-glucose, a building block, required in the biosynthesis of maltose-1-phosphate (M1P) and in the elongation reactions to produce linear alpha-1,4-glucans. Catalyzes the reaction between ATP and alpha-D-glucose 1-phosphate (G1P) to produce pyrophosphate and ADP-Glc. The chain is Glucose-1-phosphate adenylyltransferase from Mycobacteroides abscessus (strain ATCC 19977 / DSM 44196 / CCUG 20993 / CIP 104536 / JCM 13569 / NCTC 13031 / TMC 1543 / L948) (Mycobacterium abscessus).